We begin with the raw amino-acid sequence, 413 residues long: Peptidase T (413 aa).

H81 is a Zn(2+) binding site. D83 is an active-site residue. Residue D143 participates in Zn(2+) binding. Residue E178 is the Proton acceptor of the active site. Residues E179, D201, and H383 each coordinate Zn(2+).

It belongs to the peptidase M20B family. As to quaternary structure, homodimer. Zn(2+) is required as a cofactor.

It localises to the cytoplasm. It catalyses the reaction Release of the N-terminal residue from a tripeptide.. With respect to regulation, inhibited by EDTA, by the reducing agents dithiothreitol and 13-mercaptoethanol, and by the divalent cation Cu(2+). Functionally, cleaves the N-terminal amino acid of tripeptides. Has a broad specificity for tripeptides with no clear preference for a particular tripeptide. Tripeptides with proline in the second position are an exception and are not hydrolyzed. Does not hydrolyze dipeptides, tetrapeptides, or oligopeptides. This chain is Peptidase T (pepT), found in Lactococcus lactis subsp. cremoris (Streptococcus cremoris).